The sequence spans 125 residues: Aldolase FrzH (125 aa).

It carries out the reaction (2S)-3-(4-methoxyphenyl)-2-[(3S)-3-(methylamino)-8-oxo-1-azaspiro[4.5]decan-1-yl]propanal = (1S,3S,6S,7S,8R)-7-hydroxy-6-[(4-methoxyphenyl)methyl]-3-(methylamino)-5-azatricyclo[6.3.1.0(1,5)]dodecan-9-one. The protein operates within secondary metabolite biosynthesis. Functionally, aldolase; part of the gene cluster that mediates the biosynthesis of the alkaloid (-)-FR901483, a potent immunosuppressant that shows efficacy in animal models and a probable inhibitor of purine nucleotide biosynthesis by targeting phosphoribosylpyrophosphate amidotransferase (PPAT). Within the pathway, FrzH is a new kind of aldolase with no similarities to known aldolases, and which catalyzes the intramolecular aldol condensation via formation of a C9-C3' bond to yield an aza-tricyclic product. The biosynthesis of (-)-FR901483 starts with the condensation of two L-tyrosines to yield (S,S)-dityrosyl-piperazine. This process occurs in 3 steps with the non-canonical nonribosomal peptide synthetase FrzA catalyzing the reduction of L-tyrosine into L-tyrosinal, the spontaneous condensation of 2 L-tyrosinal units, and the subsequent reduction by the NmrA-like family domain-containing oxidoreductase FrzB. The cytochrome P450 monooxygenase FrzC then performs coupling between N10 and C1' to morph the piperazine into a 1,4-diazabicyclo[3.2.1]octane spiro-fused to a 2,5-cyclohexadienone. The dienone portion is further reduced to cyclohexanone by the flavin-dependent reductase FrzD. The methyltranserases (MTs) FrzE and FrzF are then involved in the methylation at the C10' amine and the C4 phenolic oxygen, respectively. The order of the two MTs appear to be interchangeable. Cleavage of the C9-N10' bond by the dioxygenase FrzG then leads to formation of a conjugated iminium. In addition to the oxidation of C9, an additional dehydrogenation between C7 and C8 can occur to give a likely shunt product. The next biosynthetic step is the intramolecular aldol condensation catalyzed by the newly identified aldolase FrzH to yield an aza-tricyclic product with the formation of a C9-C3' bond. The short-chain dehydrogenase/reductase FrzI then produces dephospho-(-)-FR901483 that is phosphorylated at C4'-OH into (-)-FR901483 by the phosphotransferase FrzJ. In Cladobotryum sp, this protein is Aldolase FrzH.